The sequence spans 877 residues: MHNLENKNASNKKPKKIVVSDLIAILTYLMEIKNKMTNKELWKIRHICLTGSYNNNQMSIMKILMNKFPKTINVPFDKQNNTYLHQSIFNRHKIFVDFFMNELNDNINYRSKNKIGISHLHALVNYGYIDHIETAIIKDPGAIQQLSDDGQNILEFAVIPCFSIISNKNSEPYKKSNTTIINIIKTLSKSITKLDLQSRNKMGYRAIECAVRYCSTDVIDELISLGFSINESRLKNRIFPTINNNDLIGFATQIDRLDMVKHLINIGAPIHMYHINKHNKLLVPTCLVVAIKFKRDQCIHYLLNLPESIQALSNNTIKKYLFNIATNAGCTNHEIISKLCPKTYDDKKLRKNCNRYKISVFEQHENKIERNIKNYYKRRFMILDSISNMLSILCSIYNFSDNDSDLHKITRTVVSLEANLLLKYTTINNVYETVADFVDHIELTDIQYCFETVSNSEIMKASDCIINEYFISMKKLGIFKKINRLIKSKNIINTLLNEFDSDSESTDDDSDTKRACSCGCQSCYDSDEDPVCDSNESDNSNDINNHVKSDNKLNSSNDYYDEDDSEDNYNNQSDDEPLVKNDVVNTINTITPNQNLENTFNENNVMINNINFEKTLNNKHQSFQDNICENISENISEKIPNNNRDNNCNNNHNNNIQGDKELFDKPLHLQYTRLTKLHEHYIHKSLYKLRHPIKLNQYDTVYNLLTSLDPYVKNNNNILVFNSDNKLIAKIFSLSIKSDTDYINDINSENDNVNMYHEKTKLQIRSKPSRWIRFYSQNICGLDKQDPNHMFPFVLDRILNDWPCIERRIRDKIHPDGLDSLLYFYGELLINGEMIRGCFEYFINSNNSVFHRLFREEYKLPQNIRDTLDESINVLSY.

ANK repeat units follow at residues 44 to 74, 79 to 109, 115 to 145, 202 to 231, 243 to 272, and 282 to 311; these read IRHICLTGSYNNNQMSIMKILMNKFPKTINV, QNNTYLHQSIFNRHKIFVDFFMNELNDNINY, IGISHLHALVNYGYIDHIETAIIKDPGAIQQ, MGYRAIECAVRYCSTDVIDELISLGFSINE, NNNDLIGFATQIDRLDMVKHLINIGAPIHM, and LVPTCLVVAIKFKRDQCIHYLLNLPESIQA. The segment at 525–579 is disordered; the sequence is DSDEDPVCDSNESDNSNDINNHVKSDNKLNSSNDYYDEDDSEDNYNNQSDDEPLV. The segment covering 533 to 544 has biased composition (low complexity); it reads DSNESDNSNDIN.

The polypeptide is Putative ankyrin repeat protein R748 (Acanthamoeba polyphaga mimivirus (APMV)).